Here is a 97-residue protein sequence, read N- to C-terminus: DNA replication protein 1 (97 aa).

Positions Ile49–Asn78 form a coiled coil.

The protein belongs to the phi29likevirus DNA replication protein 1 family. Homomultimer. Self-associates into large complexes forming long filamentous structures. Interacts (via N-terminus) with the primer terminal protein.

Its subcellular location is the host membrane. In terms of biological role, protein that assembles into highly ordered structures and provides a specific site for viral DNA replication. Probably anchors the viral DNA replisome to the host membrane. The protein is DNA replication protein 1 (1C) of Bacillus subtilis (Bacteriophage PZA).